The primary structure comprises 78 residues: Acyl carrier protein (78 aa).

Positions 2–77 constitute a Carrier domain; it reads STIEERVKKI…AAIDYVNAHQ (76 aa). An O-(pantetheine 4'-phosphoryl)serine modification is found at S37.

It belongs to the acyl carrier protein (ACP) family. Post-translationally, 4'-phosphopantetheine is transferred from CoA to a specific serine of apo-ACP by AcpS. This modification is essential for activity because fatty acids are bound in thioester linkage to the sulfhydryl of the prosthetic group.

The protein resides in the cytoplasm. It functions in the pathway lipid metabolism; fatty acid biosynthesis. Carrier of the growing fatty acid chain in fatty acid biosynthesis. This Pseudomonas entomophila (strain L48) protein is Acyl carrier protein.